The sequence spans 497 residues: IWS1-like protein (497 aa).

A disordered region spans residues M1–E191. Low complexity-rich tracts occupy residues A7–P23 and P47–R57. Composition is skewed to basic and acidic residues over residues E123–F134, D144–D160, and P181–E191. Residues S281–L361 enclose the TFIIS N-terminal domain. The tract at residues S369 to R433 is disordered. 2 stretches are compositionally biased toward basic and acidic residues: residues R370–P382 and A401–E411.

It belongs to the IWS1 family.

Its subcellular location is the nucleus. The sequence is that of IWS1-like protein from Caenorhabditis briggsae.